The following is a 61-amino-acid chain: Beta-toxin Tce4 (61 aa).

Residues 1–61 (KEGYLMDHEG…KVWEYATNRC (61 aa)) enclose the LCN-type CS-alpha/beta domain. Intrachain disulfides connect Cys-11–Cys-61, Cys-15–Cys-37, Cys-23–Cys-42, and Cys-27–Cys-44. Cys-61 bears the Cysteine amide mark.

The protein belongs to the long (4 C-C) scorpion toxin superfamily. Sodium channel inhibitor family. Beta subfamily. As to expression, expressed by the venom gland.

The protein resides in the secreted. In terms of biological role, beta toxins bind voltage-independently at site-4 of sodium channels (Nav) and shift the voltage of activation toward more negative potentials thereby affecting sodium channel activation and promoting spontaneous and repetitive firing. In Tityus cerroazul (Scorpion), this protein is Beta-toxin Tce4.